The sequence spans 75 residues: Small ribosomal subunit protein bS18 (75 aa).

This sequence belongs to the bacterial ribosomal protein bS18 family. As to quaternary structure, part of the 30S ribosomal subunit. Forms a tight heterodimer with protein bS6.

Binds as a heterodimer with protein bS6 to the central domain of the 16S rRNA, where it helps stabilize the platform of the 30S subunit. The sequence is that of Small ribosomal subunit protein bS18 from Vibrio atlanticus (strain LGP32) (Vibrio splendidus (strain Mel32)).